The sequence spans 25 residues: Tubulin alpha chain (25 aa).

Gln11 lines the GTP pocket.

The protein belongs to the tubulin family. As to quaternary structure, dimer of alpha and beta chains. A typical microtubule is a hollow water-filled tube with an outer diameter of 25 nm and an inner diameter of 15 nM. Alpha-beta heterodimers associate head-to-tail to form protofilaments running lengthwise along the microtubule wall with the beta-tubulin subunit facing the microtubule plus end conferring a structural polarity. Microtubules usually have 13 protofilaments but different protofilament numbers can be found in some organisms and specialized cells. It depends on Mg(2+) as a cofactor.

The protein localises to the cytoplasm. It localises to the cytoskeleton. The enzyme catalyses GTP + H2O = GDP + phosphate + H(+). Its function is as follows. Tubulin is the major constituent of microtubules, a cylinder consisting of laterally associated linear protofilaments composed of alpha- and beta-tubulin heterodimers. Microtubules grow by the addition of GTP-tubulin dimers to the microtubule end, where a stabilizing cap forms. Below the cap, tubulin dimers are in GDP-bound state, owing to GTPase activity of alpha-tubulin. The sequence is that of Tubulin alpha chain from Leptomonas seymouri.